A 316-amino-acid chain; its full sequence is uncharacterized protein (316 aa).

2 disordered regions span residues 82–105 and 238–257; these read AMAA…SGGN and ASVS…DTQE. Composition is skewed to low complexity over residues 84–96 and 239–255; these read AAAS…SSGT and SVSV…STDT.

It belongs to the MG307/MG309/MG338 family.

This is an uncharacterized protein from Mycoplasma pneumoniae (strain ATCC 29342 / M129 / Subtype 1) (Mycoplasmoides pneumoniae).